The sequence spans 299 residues: dTDP-4-dehydrorhamnose reductase (299 aa).

NADH contacts are provided by residues 10 to 12, aspartate 30, 39 to 40, and 63 to 65; these read GQV, DF, and AHT. 11-12 lines the NADPH pocket; it reads QV. Residues 39-40, 63-65, and tyrosine 102 contribute to the NADPH site; these read DF and AHT. 104 to 105 serves as a coordination point for dTDP-beta-L-rhamnose; it reads TD. NADH is bound by residues tyrosine 128 and lysine 132. Residues tyrosine 128 and lysine 132 each contribute to the NADPH site. Tyrosine 128 acts as the Proton donor/acceptor in catalysis. DTDP-beta-L-rhamnose is bound at residue tryptophan 153.

Belongs to the dTDP-4-dehydrorhamnose reductase family. Homodimer. The cofactor is Mg(2+).

It catalyses the reaction dTDP-beta-L-rhamnose + NADP(+) = dTDP-4-dehydro-beta-L-rhamnose + NADPH + H(+). It participates in carbohydrate biosynthesis; dTDP-L-rhamnose biosynthesis. Its pathway is bacterial outer membrane biogenesis; LPS O-antigen biosynthesis. In terms of biological role, involved in the biosynthesis of the dTDP-L-rhamnose which is an important component of lipopolysaccharide (LPS). Catalyzes the reduction of dTDP-6-deoxy-L-lyxo-4-hexulose to yield dTDP-L-rhamnose. RmlD uses NADH and NADPH nearly equally well. The chain is dTDP-4-dehydrorhamnose reductase from Escherichia coli (strain K12).